Consider the following 323-residue polypeptide: o-succinylbenzoate synthase (323 aa).

The active-site Proton donor is the K134. Residues D162, E191, and D214 each contribute to the Mg(2+) site. Catalysis depends on K236, which acts as the Proton acceptor.

The protein belongs to the mandelate racemase/muconate lactonizing enzyme family. MenC type 1 subfamily. It depends on a divalent metal cation as a cofactor.

It catalyses the reaction (1R,6R)-6-hydroxy-2-succinyl-cyclohexa-2,4-diene-1-carboxylate = 2-succinylbenzoate + H2O. It functions in the pathway quinol/quinone metabolism; 1,4-dihydroxy-2-naphthoate biosynthesis; 1,4-dihydroxy-2-naphthoate from chorismate: step 4/7. Its pathway is quinol/quinone metabolism; menaquinone biosynthesis. Converts 2-succinyl-6-hydroxy-2,4-cyclohexadiene-1-carboxylate (SHCHC) to 2-succinylbenzoate (OSB). In Pectobacterium atrosepticum (strain SCRI 1043 / ATCC BAA-672) (Erwinia carotovora subsp. atroseptica), this protein is o-succinylbenzoate synthase.